Consider the following 519-residue polypeptide: uncharacterized protein (519 aa).

Residues isoleucine 477–glutamine 486 are compositionally biased toward basic residues. The tract at residues isoleucine 477–histidine 519 is disordered.

This is an uncharacterized protein from Mycobacterium tuberculosis (strain ATCC 25618 / H37Rv).